Reading from the N-terminus, the 193-residue chain is Cuticle protein 18.7 (193 aa).

In terms of biological role, component of the cuticle of migratory locust which contains more than 100 different structural proteins. The protein is Cuticle protein 18.7 of Locusta migratoria (Migratory locust).